The primary structure comprises 146 residues: D-aminoacyl-tRNA deacylase (146 aa).

Residues 138–139 (GP) carry the Gly-cisPro motif, important for rejection of L-amino acids motif.

This sequence belongs to the DTD family. As to quaternary structure, homodimer.

The protein localises to the cytoplasm. The catalysed reaction is glycyl-tRNA(Ala) + H2O = tRNA(Ala) + glycine + H(+). It carries out the reaction a D-aminoacyl-tRNA + H2O = a tRNA + a D-alpha-amino acid + H(+). In terms of biological role, an aminoacyl-tRNA editing enzyme that deacylates mischarged D-aminoacyl-tRNAs. Also deacylates mischarged glycyl-tRNA(Ala), protecting cells against glycine mischarging by AlaRS. Acts via tRNA-based rather than protein-based catalysis; rejects L-amino acids rather than detecting D-amino acids in the active site. By recycling D-aminoacyl-tRNA to D-amino acids and free tRNA molecules, this enzyme counteracts the toxicity associated with the formation of D-aminoacyl-tRNA entities in vivo and helps enforce protein L-homochirality. The polypeptide is D-aminoacyl-tRNA deacylase (Xanthomonas oryzae pv. oryzae (strain MAFF 311018)).